We begin with the raw amino-acid sequence, 188 residues long: Adenylate kinase (188 aa).

11–16 (GAGKGT) provides a ligand contact to ATP. Residues 31–60 (STGDIFRANIKDQTELGREAQRYTDAGNLV) form an NMP region. AMP-binding positions include Thr32, Arg37, 58–60 (NLV), 86–89 (GYPR), and Gln93. The LID stretch occupies residues 127 to 137 (GRAQEQGRTDD). Arg128 serves as a coordination point for ATP. The AMP site is built by Arg134 and Arg145. Gly173 lines the ATP pocket.

The protein belongs to the adenylate kinase family. Monomer.

The protein localises to the cytoplasm. It carries out the reaction AMP + ATP = 2 ADP. It participates in purine metabolism; AMP biosynthesis via salvage pathway; AMP from ADP: step 1/1. Its function is as follows. Catalyzes the reversible transfer of the terminal phosphate group between ATP and AMP. Plays an important role in cellular energy homeostasis and in adenine nucleotide metabolism. The protein is Adenylate kinase of Kocuria rhizophila (strain ATCC 9341 / DSM 348 / NBRC 103217 / DC2201).